The following is a 208-amino-acid chain: Large ribosomal subunit protein uL3 (208 aa).

The disordered stretch occupies residues 117 to 149 (GFQGAIKRHGQSRGPMAHGSRYHRRPGSMGPVA).

This sequence belongs to the universal ribosomal protein uL3 family. As to quaternary structure, part of the 50S ribosomal subunit. Forms a cluster with proteins L14 and L19.

In terms of biological role, one of the primary rRNA binding proteins, it binds directly near the 3'-end of the 23S rRNA, where it nucleates assembly of the 50S subunit. This chain is Large ribosomal subunit protein uL3, found in Exiguobacterium sp. (strain ATCC BAA-1283 / AT1b).